We begin with the raw amino-acid sequence, 184 residues long: UPF0149 protein PP_5201 (184 aa).

Belongs to the UPF0149 family.

In Pseudomonas putida (strain ATCC 47054 / DSM 6125 / CFBP 8728 / NCIMB 11950 / KT2440), this protein is UPF0149 protein PP_5201.